Reading from the N-terminus, the 390-residue chain is Pepsin B (390 aa).

An N-terminal signal peptide occupies residues 1–16 (MKIQVLVLVCLHLSEG). Positions 17 to 59 (VERIILKKGKSIRQVMEERGVLETFLRNHPKVDPAAKYLFNND) are cleaved as a propeptide — activation peptide. Residues 74–387 (YFGEISIGTP…DMAANRVGFA (314 aa)) enclose the Peptidase A1 domain. The active site involves Asp-92. Intrachain disulfides connect Cys-105-Cys-110 and Cys-269-Cys-273. The active site involves Asp-278. A disulfide bond links Cys-312 and Cys-345.

This sequence belongs to the peptidase A1 family.

Its subcellular location is the secreted. It carries out the reaction Degradation of gelatin, little activity on hemoglobin. Specificity on B chain of insulin more restricted than that of pepsin A. Does not cleave 1-Phe-|-Val-2, 4-Gln-|-His-5 or 23-Gly-|-Phe-24.. In terms of biological role, hydrolyzes various peptides including beta-endorphin, insulin B chain, dynorphin A, and neurokinin A, with high specificity for the cleavage of the Phe-Xaa bonds. This chain is Pepsin B (PGB), found in Canis lupus familiaris (Dog).